Here is a 127-residue protein sequence, read N- to C-terminus: Major sperm protein 49 (127 aa).

Residue Ala2 is modified to N-acetylalanine. The MSP domain maps to 9–126 (DIQTQPGTKI…RRKNLPIEYN (118 aa)).

As to expression, sperm.

It localises to the cell projection. It is found in the pseudopodium. The protein localises to the cytoplasm. The protein resides in the cytoskeleton. Functionally, central component in molecular interactions underlying sperm crawling. Forms an extensive filament system that extends from sperm villipoda, along the leading edge of the pseudopod. This Caenorhabditis elegans protein is Major sperm protein 49 (msp-49).